The sequence spans 209 residues: Ribosomal RNA small subunit methyltransferase G (209 aa).

S-adenosyl-L-methionine is bound by residues glycine 72, leucine 77, 123–124, and arginine 138; that span reads AE.

The protein belongs to the methyltransferase superfamily. RNA methyltransferase RsmG family.

It is found in the cytoplasm. Functionally, specifically methylates the N7 position of guanine in position 518 of 16S rRNA. The sequence is that of Ribosomal RNA small subunit methyltransferase G from Leifsonia xyli subsp. xyli (strain CTCB07).